Reading from the N-terminus, the 718-residue chain is Polyribonucleotide nucleotidyltransferase (718 aa).

The Mg(2+) site is built by Asp-497 and Asp-503. The 60-residue stretch at 564-623 (PRLLTLKIEPEHIGMVIGPGGKTIKGITEQTSCKIDIADDGTVTIASSEGERAERARQMI) folds into the KH domain. The S1 motif domain occupies 633 to 701 (GEVYLGRVTR…SKGRLNLTRL (69 aa)).

This sequence belongs to the polyribonucleotide nucleotidyltransferase family. Interacts with RNase E (rne). The cofactor is Mg(2+).

Its subcellular location is the cytoplasm. It catalyses the reaction RNA(n+1) + phosphate = RNA(n) + a ribonucleoside 5'-diphosphate. Functionally, involved in mRNA degradation. Catalyzes the phosphorolysis of single-stranded polyribonucleotides processively in the 3'- to 5'-direction. The polypeptide is Polyribonucleotide nucleotidyltransferase (Synechocystis sp. (strain ATCC 27184 / PCC 6803 / Kazusa)).